The primary structure comprises 159 residues: MTQLTHINTAGEAHMVDVSAKNETVREARAEAFVDMQAATLAMIIDGSHHKGDVFATARIAGIQAAKKTWELIPLCHPLLLTKVEVKLEAQPEHNRVRIETCCRLTGKTGVEMEALTAASVAALTIYDMCKAVQKDMVIGPVRLLTKSGGKSGDFKVDI.

Substrate-binding positions include 75–77 (LCH) and 113–114 (ME). Asp128 is an active-site residue.

Belongs to the MoaC family. In terms of assembly, homohexamer; trimer of dimers.

The catalysed reaction is (8S)-3',8-cyclo-7,8-dihydroguanosine 5'-triphosphate = cyclic pyranopterin phosphate + diphosphate. The protein operates within cofactor biosynthesis; molybdopterin biosynthesis. Its function is as follows. Catalyzes the conversion of (8S)-3',8-cyclo-7,8-dihydroguanosine 5'-triphosphate to cyclic pyranopterin monophosphate (cPMP). The protein is Cyclic pyranopterin monophosphate synthase of Yersinia pseudotuberculosis serotype IB (strain PB1/+).